The sequence spans 551 residues: Putative transport protein CGSHiGG_02670 (551 aa).

Transmembrane regions (helical) follow at residues 4–24 (IAITISLLALVAVIGLWIGHW), 28–48 (GVGLGIGGVLFGGIIVAHFTN), 65–85 (FGLILFVYTIGIQVGPGFFSS), 95–115 (AFAILIIVLGSIAVVLVHKIA), and 157–177 (VSYAMAYPFGICGILLAMWLI). RCK C-terminal domains lie at 191 to 275 (RFNA…IIGH) and 277 to 360 (VDAP…VIGN). The next 6 membrane-spanning stretches (helical) occupy residues 370-390 (MLPVFIGIGLGVLVGSIPFYI), 402-424 (AGGPLVVALILARIGTIGKLYWF), 438-458 (IVLFLAVVGLKSGGSFFDTLV), 463-483 (LEWMGYGIFITFVPLIIVGTI), 492-512 (YLTICGLLAGSMTDPPALAFA), and 529-549 (VYPLVMFLRIMSPQLLAVLLW).

Belongs to the AAE transporter (TC 2.A.81) family. YidE subfamily.

It is found in the cell membrane. The sequence is that of Putative transport protein CGSHiGG_02670 from Haemophilus influenzae (strain PittGG).